A 915-amino-acid polypeptide reads, in one-letter code: Protein SLFN14 (915 aa).

The segment covering 157–167 (AAQRGRRRLHP) has biased composition (basic residues). The interval 157 to 176 (AAQRGRRRLHPPRASNSNLQ) is disordered. Residues 204–389 (ESTHVEFKRF…KVLEFKGALQ (186 aa)) are required for endoribonuclease activity. The tract at residues 390–569 (RHLFPVTQKT…QLGCEFFNLL (180 aa)) is required for ribosome binding.

Associates with ribosomes in an ATP-independent manner. It depends on Mg(2+) as a cofactor. Requires Mn(2+) as cofactor. Detected in reticulocytes (at protein level).

Its subcellular location is the nucleus. Its function is as follows. Shows no ribosome-associated and endoribonuclease activities. In terms of biological role, displays polysome-associated endoribonuclease activity towards mRNAs and rRNAs. May play a role in RNA surveillance pathways by recognizing stalled ribosomes and triggering endonucleolytic cleavage of aberrant mRNAs. Cleaves RNAs in a magnesium-, manganese-dependent and ATP-independent manner. Involved in correct maturation of megakaryocytes and especially important for proplatelet extension. This chain is Protein SLFN14, found in Oryctolagus cuniculus (Rabbit).